The following is a 478-amino-acid chain: Protein nucleotidyltransferase YdiU (478 aa).

Positions 84, 86, 87, 107, 119, 120, 170, and 177 each coordinate ATP. Aspartate 246 acts as the Proton acceptor in catalysis. Residues asparagine 247 and aspartate 256 each coordinate Mg(2+). Aspartate 256 serves as a coordination point for ATP.

Belongs to the SELO family. The cofactor is Mg(2+). Requires Mn(2+) as cofactor.

The enzyme catalyses L-seryl-[protein] + ATP = 3-O-(5'-adenylyl)-L-seryl-[protein] + diphosphate. It carries out the reaction L-threonyl-[protein] + ATP = 3-O-(5'-adenylyl)-L-threonyl-[protein] + diphosphate. The catalysed reaction is L-tyrosyl-[protein] + ATP = O-(5'-adenylyl)-L-tyrosyl-[protein] + diphosphate. It catalyses the reaction L-histidyl-[protein] + UTP = N(tele)-(5'-uridylyl)-L-histidyl-[protein] + diphosphate. The enzyme catalyses L-seryl-[protein] + UTP = O-(5'-uridylyl)-L-seryl-[protein] + diphosphate. It carries out the reaction L-tyrosyl-[protein] + UTP = O-(5'-uridylyl)-L-tyrosyl-[protein] + diphosphate. Its function is as follows. Nucleotidyltransferase involved in the post-translational modification of proteins. It can catalyze the addition of adenosine monophosphate (AMP) or uridine monophosphate (UMP) to a protein, resulting in modifications known as AMPylation and UMPylation. The chain is Protein nucleotidyltransferase YdiU from Shigella boydii serotype 18 (strain CDC 3083-94 / BS512).